The sequence spans 442 residues: tRNA modification GTPase MnmE (442 aa).

R27, E84, and K124 together coordinate (6S)-5-formyl-5,6,7,8-tetrahydrofolate. The TrmE-type G domain occupies 221 to 366 (GFQIVILGAP…LMELISQASA (146 aa)). GTP contacts are provided by residues 231–236 (NAGKSS), 250–256 (TEEPGTT), 275–278 (DTAG), and 329–332 (NKAD). Residues S235 and T256 each contribute to the Mg(2+) site. K442 contacts (6S)-5-formyl-5,6,7,8-tetrahydrofolate.

This sequence belongs to the TRAFAC class TrmE-Era-EngA-EngB-Septin-like GTPase superfamily. TrmE GTPase family. Homodimer. Heterotetramer of two MnmE and two MnmG subunits. It depends on K(+) as a cofactor.

It localises to the cytoplasm. Functionally, exhibits a very high intrinsic GTPase hydrolysis rate. Involved in the addition of a carboxymethylaminomethyl (cmnm) group at the wobble position (U34) of certain tRNAs, forming tRNA-cmnm(5)s(2)U34. The protein is tRNA modification GTPase MnmE of Chelativorans sp. (strain BNC1).